A 548-amino-acid chain; its full sequence is T-complex protein 1 subunit theta (548 aa).

Ala-2 is subject to N-acetylalanine. Ser-23 carries the post-translational modification Phosphoserine. Tyr-30 carries the post-translational modification Phosphotyrosine. 2 residues coordinate ADP: Tyr-47 and Gly-48. Position 99 (Asp-99) interacts with Mg(2+). 4 residues coordinate ADP: Gly-100, Thr-101, Asn-102, and Phe-103. ATP-binding residues include Gly-100, Thr-101, and Asn-102. Position 162 is a phosphoserine (Ser-162). Positions 169, 170, and 171 each coordinate ADP. Residues Ser-170 and Lys-171 each contribute to the ATP site. Residues Lys-224, Lys-254, and Lys-260 each participate in a glycyl lysine isopeptide (Lys-Gly) (interchain with G-Cter in SUMO2) cross-link. A phosphoserine mark is found at Ser-269 and Ser-317. 2 positions are modified to N6-acetyllysine: Lys-318 and Lys-400. Gly-412 is an ADP binding site. Position 412 (Gly-412) interacts with ATP. Residue Lys-459 forms a Glycyl lysine isopeptide (Lys-Gly) (interchain with G-Cter in SUMO1) linkage. Lys-466 carries the N6-acetyllysine modification. Asp-499 lines the ADP pocket. ATP is bound by residues Asp-499 and Lys-504. Position 505 is a phosphotyrosine (Tyr-505). The tract at residues 529 to 548 (PAGGPKPPSGKKDWDDDQND) is disordered. A Glycyl lysine isopeptide (Lys-Gly) (interchain with G-Cter in SUMO2) cross-link involves residue Lys-534. Phosphoserine is present on Ser-537. A Glycyl lysine isopeptide (Lys-Gly) (interchain with G-Cter in SUMO2) cross-link involves residue Lys-539.

It belongs to the TCP-1 chaperonin family. As to quaternary structure, component of the chaperonin-containing T-complex (TRiC), a hexadecamer composed of two identical back-to-back stacked rings enclosing a protein folding chamber. Each ring is made up of eight different subunits: TCP1/CCT1, CCT2, CCT3, CCT4, CCT5, CCT6A/CCT6, CCT7, CCT8. Interacts with PACRG. Interacts with DNAAF4. Interacts with synaptic plasticity regulator PANTS.

The protein localises to the cytoplasm. It is found in the cytoskeleton. Its subcellular location is the microtubule organizing center. It localises to the centrosome. The protein resides in the cilium basal body. It catalyses the reaction ATP + H2O = ADP + phosphate + H(+). Functionally, component of the chaperonin-containing T-complex (TRiC), a molecular chaperone complex that assists the folding of actin, tubulin and other proteins upon ATP hydrolysis. The TRiC complex mediates the folding of WRAP53/TCAB1, thereby regulating telomere maintenance. As part of the TRiC complex may play a role in the assembly of BBSome, a complex involved in ciliogenesis regulating transports vesicles to the cilia. The chain is T-complex protein 1 subunit theta (Cct8) from Mus musculus (Mouse).